The following is a 98-amino-acid chain: Large ribosomal subunit protein uL23 (98 aa).

This sequence belongs to the universal ribosomal protein uL23 family. Part of the 50S ribosomal subunit. Contacts protein L29, and trigger factor when it is bound to the ribosome.

Functionally, one of the early assembly proteins it binds 23S rRNA. One of the proteins that surrounds the polypeptide exit tunnel on the outside of the ribosome. Forms the main docking site for trigger factor binding to the ribosome. The chain is Large ribosomal subunit protein uL23 from Streptococcus pyogenes serotype M1.